A 213-amino-acid polypeptide reads, in one-letter code: Large ribosomal subunit protein uL3 (213 aa).

It belongs to the universal ribosomal protein uL3 family. In terms of assembly, part of the 50S ribosomal subunit. Forms a cluster with proteins L14 and L19.

Its function is as follows. One of the primary rRNA binding proteins, it binds directly near the 3'-end of the 23S rRNA, where it nucleates assembly of the 50S subunit. The polypeptide is Large ribosomal subunit protein uL3 (Kosmotoga olearia (strain ATCC BAA-1733 / DSM 21960 / TBF 19.5.1)).